Reading from the N-terminus, the 198-residue chain is Na(+)-translocating NADH-quinone reductase subunit E (198 aa).

6 helical membrane-spanning segments follow: residues 11 to 31, 35 to 55, 77 to 97, 110 to 130, 140 to 160, and 176 to 196; these read AVFV…FLAV, VSTA…AVPI, FLNF…LEMI, GIFL…SFMV, IVYG…MAGI, and LGIT…FSGV.

Belongs to the NqrDE/RnfAE family. As to quaternary structure, composed of six subunits; NqrA, NqrB, NqrC, NqrD, NqrE and NqrF.

It localises to the cell inner membrane. It catalyses the reaction a ubiquinone + n Na(+)(in) + NADH + H(+) = a ubiquinol + n Na(+)(out) + NAD(+). Functionally, NQR complex catalyzes the reduction of ubiquinone-1 to ubiquinol by two successive reactions, coupled with the transport of Na(+) ions from the cytoplasm to the periplasm. NqrA to NqrE are probably involved in the second step, the conversion of ubisemiquinone to ubiquinol. The polypeptide is Na(+)-translocating NADH-quinone reductase subunit E (Klebsiella pneumoniae subsp. pneumoniae (strain ATCC 700721 / MGH 78578)).